The sequence spans 129 residues: Follitropin subunit beta (129 aa).

Residues 1-20 form the signal peptide; sequence MKTVQFCFLFCCWKAICCNS. 6 disulfide bridges follow: cysteine 21-cysteine 69, cysteine 35-cysteine 84, cysteine 38-cysteine 122, cysteine 46-cysteine 100, cysteine 50-cysteine 102, and cysteine 105-cysteine 112. Residues asparagine 25 and asparagine 42 are each glycosylated (N-linked (GlcNAc...) asparagine).

Belongs to the glycoprotein hormones subunit beta family. In terms of assembly, heterodimer. The active follitropin is a heterodimer composed of an alpha chain/CGA shared with other hormones and a unique beta chain/FSHB shown here.

The protein resides in the secreted. Its function is as follows. Together with the alpha chain CGA constitutes follitropin, the follicle-stimulating hormone, and provides its biological specificity to the hormone heterodimer. Binds FSHR, a G protein-coupled receptor, on target cells to activate downstream signaling pathways. Follitropin is involved in follicle development and spermatogenesis in reproductive organs. The protein is Follitropin subunit beta (FSHB) of Saimiri boliviensis boliviensis (Bolivian squirrel monkey).